A 95-amino-acid chain; its full sequence is Ferredoxin-like protein FixX (95 aa).

This sequence belongs to the bacterial-type ferredoxin family. FixX subfamily.

Its function is as follows. Could be part of an electron transfer system required for anaerobic carnitine reduction. Could be a 3Fe-4S cluster-containing protein. The polypeptide is Ferredoxin-like protein FixX (fixX) (Escherichia coli O157:H7).